The primary structure comprises 1182 residues: CRISPR-associated endoribonuclease Cas13a (1182 aa).

The stretch at 132 to 279 forms a coiled coil; it reads FNNLIEKVQN…ENNSDNKLKQ (148 aa). Positions 366-508 are HEPN-like fold 1; it reads YIKNTGQLET…NNEEIKGYFI (143 aa). Positions 896 to 955 form a coiled coil; it reads KVEKENIEDYNKKEEIEQKKKSNIEKLQDLKVELHKKWEQNKITEKEIEKYNNTTRKINE. The interval 965–1120 is HEPN-like fold 2; sequence LQNVYLLHEM…QNHILKSTKT (156 aa).

Belongs to the CRISPR-associated endoribonuclease Cas13a family. It depends on a divalent metal cation as a cofactor.

With respect to regulation, target RNA acts as an activator for non-specific ssRNA degradation. Functionally, CRISPR (clustered regularly interspaced short palindromic repeat), is an adaptive immune system that provides protection against mobile genetic elements (viruses, transposable elements and conjugative plasmids). CRISPR clusters contain sequences complementary to antecedent mobile elements and target invading nucleic acids. Unlike many single-component effectors, this CRISPR-Cas system targets RNA. CRISPR clusters are transcribed from pre-CRISPR RNA (crRNA) and processed into crRNA by this protein. Cleaves linear target ssRNA in a pre-crRNA-dependent fashion, preferentially before U residues. Binding a viable target RNA target activates this protein for non-specific RNA degradation in vitro (called collateral RNA degradation), which is fairly sensitive as it requires picomolar levels of viable target RNA. In Leptotrichia wadei (strain F0279), this protein is CRISPR-associated endoribonuclease Cas13a.